We begin with the raw amino-acid sequence, 260 residues long: Phosphatidate cytidylyltransferase (260 aa).

7 consecutive transmembrane segments (helical) span residues 9-29 (IIAL…LMLF), 46-66 (MIKL…IIML), 70-90 (AGDW…FILL), 102-122 (FMDA…FMYF), 130-150 (LHYI…AYIF), 172-192 (FIGG…FVDF), and 196-216 (IWLL…GDLV).

It belongs to the CDS family.

The protein localises to the cell membrane. It catalyses the reaction a 1,2-diacyl-sn-glycero-3-phosphate + CTP + H(+) = a CDP-1,2-diacyl-sn-glycerol + diphosphate. Its pathway is phospholipid metabolism; CDP-diacylglycerol biosynthesis; CDP-diacylglycerol from sn-glycerol 3-phosphate: step 3/3. This Staphylococcus haemolyticus (strain JCSC1435) protein is Phosphatidate cytidylyltransferase (cdsA).